A 193-amino-acid polypeptide reads, in one-letter code: Selenate reductase assembly chaperone protein (193 aa).

It belongs to the type II DMSO reductase enzyme chaperone family.

The protein localises to the cytoplasm. In terms of biological role, may function as a system-specific chaperone protein essential for the assembly of an active selenate reductase SerABC. This Thauera selenatis protein is Selenate reductase assembly chaperone protein.